Reading from the N-terminus, the 475-residue chain is Glutamyl-tRNA(Gln) amidotransferase subunit A (475 aa).

Residues K76 and S151 each act as charge relay system in the active site. S175 functions as the Acyl-ester intermediate in the catalytic mechanism.

The protein belongs to the amidase family. GatA subfamily. Heterotrimer of A, B and C subunits.

It catalyses the reaction L-glutamyl-tRNA(Gln) + L-glutamine + ATP + H2O = L-glutaminyl-tRNA(Gln) + L-glutamate + ADP + phosphate + H(+). In terms of biological role, allows the formation of correctly charged Gln-tRNA(Gln) through the transamidation of misacylated Glu-tRNA(Gln) in organisms which lack glutaminyl-tRNA synthetase. The reaction takes place in the presence of glutamine and ATP through an activated gamma-phospho-Glu-tRNA(Gln). The chain is Glutamyl-tRNA(Gln) amidotransferase subunit A from Pelodictyon phaeoclathratiforme (strain DSM 5477 / BU-1).